The following is a 447-amino-acid chain: GTPase Der (447 aa).

EngA-type G domains follow at residues 3–167 (PVIA…VQER) and 181–354 (VKIA…AAAM). Residues 9 to 16 (GRPNVGKS), 56 to 60 (DTGGF), 119 to 122 (NKAE), 187 to 194 (GRPNVGKS), 234 to 238 (DTAGL), and 299 to 302 (NKWD) contribute to the GTP site. Residues 355-439 (VKLPTPQLTR…PLRIEFRTNK (85 aa)) enclose the KH-like domain.

Belongs to the TRAFAC class TrmE-Era-EngA-EngB-Septin-like GTPase superfamily. EngA (Der) GTPase family. As to quaternary structure, associates with the 50S ribosomal subunit.

Its function is as follows. GTPase that plays an essential role in the late steps of ribosome biogenesis. In Cupriavidus pinatubonensis (strain JMP 134 / LMG 1197) (Cupriavidus necator (strain JMP 134)), this protein is GTPase Der.